The primary structure comprises 389 residues: snRNA-activating protein complex subunit 1 (389 aa).

Low complexity predominate over residues 1–15; sequence MGTPAGAGTRPTGAG. Disordered regions lie at residues 1-22, 245-276, and 290-389; these read MGTP…GVGI, WHKE…ERCE, and SAVV…KRKC. Residues 20–187 are SNAPC3-binding; sequence VGIPPGLQTD…QKFKDPNDRV (168 aa). The SNAPC4-binding stretch occupies residues 183–287; sequence PNDRVMKLIT…AVSLAKIKAK (105 aa). Residues 245–262 are compositionally biased toward basic and acidic residues; it reads WHKERKNPSLKPKLKDGE. Phosphoserine occurs at positions 308 and 309.

As to quaternary structure, part of the SNAPc complex composed of 5 subunits: SNAPC1, SNAPC2, SNAPC3, SNAPC4 and SNAPC5. SNAPC1 interacts with SNAPC3, SNAPC4 and TBP.

The protein resides in the nucleus. Functionally, part of the SNAPc complex required for the transcription of both RNA polymerase II and III small-nuclear RNA genes. Binds to the proximal sequence element (PSE), a non-TATA-box basal promoter element common to these 2 types of genes. Recruits TBP and BRF2 to the U6 snRNA TATA box. The chain is snRNA-activating protein complex subunit 1 (Snapc1) from Mus musculus (Mouse).